A 623-amino-acid polypeptide reads, in one-letter code: Xaa-Pro aminopeptidase 1 (623 aa).

Arg-77 lines the a peptide pocket. At Lys-304 the chain carries N6-acetyllysine. Residue His-395 participates in a peptide binding. 3 residues coordinate Mn(2+): Asp-415, Asp-426, and His-489. Positions 489, 498, and 523 each coordinate a peptide. Residues Glu-523 and Glu-537 each coordinate Mn(2+).

Belongs to the peptidase M24B family. As to quaternary structure, homodimer. Mn(2+) is required as a cofactor.

Its subcellular location is the cytoplasm. It localises to the cytosol. The enzyme catalyses Release of any N-terminal amino acid, including proline, that is linked to proline, even from a dipeptide or tripeptide.. Functionally, metalloaminopeptidase that catalyzes the removal of a penultimate prolyl residue from the N-termini of peptides, such as Arg-Pro-Pro. Contributes to the degradation of bradykinin. This chain is Xaa-Pro aminopeptidase 1 (XPNPEP1), found in Bos taurus (Bovine).